A 197-amino-acid polypeptide reads, in one-letter code: Phosphoheptose isomerase (197 aa).

One can recognise an SIS domain in the interval 34–196; that stretch reads MVQCLLGGNK…DRTLFPQDDQ (163 aa). 49–51 contacts substrate; the sequence is NGG. Positions 58 and 62 each coordinate Zn(2+). Residues glutamate 62, 91–92, 117–119, serine 122, and glutamine 172 contribute to the substrate site; these read ND and STS. Glutamine 172 and histidine 180 together coordinate Zn(2+).

It belongs to the SIS family. GmhA subfamily. As to quaternary structure, homotetramer. Requires Zn(2+) as cofactor.

It localises to the cytoplasm. It carries out the reaction 2 D-sedoheptulose 7-phosphate = D-glycero-alpha-D-manno-heptose 7-phosphate + D-glycero-beta-D-manno-heptose 7-phosphate. It participates in carbohydrate biosynthesis; D-glycero-D-manno-heptose 7-phosphate biosynthesis; D-glycero-alpha-D-manno-heptose 7-phosphate and D-glycero-beta-D-manno-heptose 7-phosphate from sedoheptulose 7-phosphate: step 1/1. In terms of biological role, catalyzes the isomerization of sedoheptulose 7-phosphate in D-glycero-D-manno-heptose 7-phosphate. This is Phosphoheptose isomerase from Shewanella loihica (strain ATCC BAA-1088 / PV-4).